Here is a 62-residue protein sequence, read N- to C-terminus: uncharacterized protein (62 aa).

This is an uncharacterized protein from Homo sapiens (Human).